We begin with the raw amino-acid sequence, 136 residues long: Large ribosomal subunit protein uL16 (136 aa).

The protein belongs to the universal ribosomal protein uL16 family. As to quaternary structure, part of the 50S ribosomal subunit.

Its function is as follows. Binds 23S rRNA and is also seen to make contacts with the A and possibly P site tRNAs. This Histophilus somni (strain 129Pt) (Haemophilus somnus) protein is Large ribosomal subunit protein uL16.